Here is a 213-residue protein sequence, read N- to C-terminus: MFTLRELPFAKDSMGDFLSPVAFDFHHGKHHQTYVNNLNNLIKGTDFEKSSLFDILTKSSGGVFNNAAQIYNHDFYWDCLSPKATALSDELKGALEKDFGSLEKFKEDFIKSATTLFGSGWNWAAYNLDTQKIEIIQTSNAQTPVTDKKVPLLVVDVWEHAYYIDHKNARPVYLEKFYGHINWHFVSQCYEWAKKEGLGSVDYYINELVHKKA.

Fe cation contacts are provided by His-26, His-73, Asp-156, and His-160.

The protein belongs to the iron/manganese superoxide dismutase family. As to quaternary structure, homodimer. The cofactor is Fe cation.

The catalysed reaction is 2 superoxide + 2 H(+) = H2O2 + O2. In terms of biological role, destroys superoxide anion radicals which are normally produced within the cells and which are toxic to biological systems. The polypeptide is Superoxide dismutase [Fe] (sodB) (Helicobacter pylori (strain ATCC 700392 / 26695) (Campylobacter pylori)).